The chain runs to 110 residues: Keratin, type I cytoskeletal 19 (110 aa).

Residues 1-8 form a head region; it reads FGSGGVFR. A Phosphoserine modification is found at Ser-3. The IF rod domain occupies 7-110; it reads FRITMQNLND…KLEQEIATYR (104 aa). Omega-N-methylarginine is present on Arg-8. A coil 1A region spans residues 9–42; sequence ITMQNLNDRLASYLDKVRALEQANGELEVKIRDW. The tract at residues 43-45 is linker 1; the sequence is YQK. The interval 46 to 83 is coil 1B; the sequence is IVLQIDNARTKFETEQALRVLDELTLARKNHEEEISAL. The tract at residues 85–110 is coil 2; the sequence is ADTERQNQEYQQLMDIKLEQEIATYR. The interval 85–110 is necessary for interaction with PNN; the sequence is ADTERQNQEYQQLMDIKLEQEIATYR.

This sequence belongs to the intermediate filament family. As to quaternary structure, heterotetramer of two type I and two type II keratins. Interacts with PNN and the actin-binding domain of DMD.

Its function is as follows. Involved in the organization of myofibers. Together with KRT8, helps to link the contractile apparatus to dystrophin at the costameres of striated muscle. The polypeptide is Keratin, type I cytoskeletal 19 (Mesocricetus auratus (Golden hamster)).